The primary structure comprises 228 residues: UPF0758 protein CLB_3028 (228 aa).

An MPN domain is found at 106-228 (KISTPLDVSN…YVSMKEKGTI (123 aa)). Zn(2+) contacts are provided by His-177, His-179, and Asp-190. The JAMM motif motif lies at 177–190 (HNHPSGDPTPSKED).

The protein belongs to the UPF0758 family.

In Clostridium botulinum (strain ATCC 19397 / Type A), this protein is UPF0758 protein CLB_3028.